The chain runs to 514 residues: Efflux pump aflT (514 aa).

10 consecutive transmembrane segments (helical) span residues 13 to 33, 61 to 81, 85 to 105, 116 to 136, 146 to 166, 174 to 194, 218 to 238, 247 to 267, 289 to 309, and 321 to 341; these read ISGM…FCVA, SAYL…YALF, WVFL…GVAP, IAGV…AHIV, GLLG…GGAF, WCFY…LFLL, GTIV…WGGV, IIAL…IQVL, VFVF…PIWF, and GIDS…SGAV. N-linked (GlcNAc...) asparagine glycosylation occurs at asparagine 343. 4 consecutive transmembrane segments (helical) span residues 351–371, 378–398, 411–431, and 485–505; these read WFIV…LFTV, WIGF…QGAV, IGTA…TSVA, and LDVF…AVGI.

Belongs to the major facilitator superfamily. TCR/Tet family.

The protein resides in the cell membrane. In terms of biological role, efflux pump; part of the gene cluster that mediates the biosynthesis of aflatoxins. The sequence is that of Efflux pump aflT from Aspergillus parasiticus (strain ATCC 56775 / NRRL 5862 / SRRC 143 / SU-1).